Consider the following 389-residue polypeptide: Urotensin-2 receptor (389 aa).

A compositionally biased stretch (polar residues) spans 1–10 (MALTPESPSS). The disordered stretch occupies residues 1–39 (MALTPESPSSFPGLAATGSSVPEPPGGPNATLNSSWASP). The Extracellular portion of the chain corresponds to 1 to 54 (MALTPESPSSFPGLAATGSSVPEPPGGPNATLNSSWASPTEPSSLEDLVATGTI). N29 and N33 each carry an N-linked (GlcNAc...) asparagine glycan. A compositionally biased stretch (polar residues) spans 30-39 (ATLNSSWASP). The helical transmembrane segment at 55 to 77 (GTLLSAMGVVGVVGNAYTLVVTC) threads the bilayer. Residues 78–87 (RSLRAVASMY) lie on the Cytoplasmic side of the membrane. The chain crosses the membrane as a helical span at residues 88-113 (VYVVNLALADLLYLLSIPFIVATYVT). Residues 114–124 (KEWHFGDVGCR) are Extracellular-facing. A disulfide bridge links C123 with C199. Residues 125 to 146 (VLFGLDFLTMHASIFTLTVMSS) traverse the membrane as a helical segment. The Cytoplasmic portion of the chain corresponds to 147–167 (ERYAAVLRPLDTVQRPKGYRK). The helical transmembrane segment at 168–186 (LLALGTWLLALLLTLPVML) threads the bilayer. At 187 to 209 (AMRLVRRGPKSLCLPAWGPRAHR) the chain is on the extracellular side. Residues 210 to 232 (AYLTLLFATSIAGPGLLIGLLYA) form a helical membrane-spanning segment. At 233 to 258 (RLARAYRRSQRASFKRARRPGARALR) the chain is on the cytoplasmic side. The chain crosses the membrane as a helical span at residues 259–284 (LVLGIVLLFWACFLPFWLWQLLAQYH). Residues 285–297 (QAPLAPRTARIVN) lie on the Extracellular side of the membrane. The helical transmembrane segment at 298 to 318 (YLTTCLTYGNSCANPFLYTLL) threads the bilayer. Residues 319–389 (TRNYRDHLRG…PAPEGPRAPA (71 aa)) lie on the Cytoplasmic side of the membrane. The segment at 328–389 (GRVRGPGSGG…PAPEGPRAPA (62 aa)) is disordered. Over residues 331–340 (RGPGSGGGRG) the composition is skewed to gly residues. Over residues 355–368 (SGRSLSSCSPQPTD) the composition is skewed to polar residues. A compositionally biased stretch (pro residues) spans 377–389 (PARPAPEGPRAPA).

Belongs to the G-protein coupled receptor 1 family. Most abundant expression in the heart and pancreas.

It is found in the cell membrane. High affinity receptor for urotensin-2 and urotensin-2B. The activity of this receptor is mediated by a G-protein that activate a phosphatidylinositol-calcium second messenger system. This Homo sapiens (Human) protein is Urotensin-2 receptor (UTS2R).